The primary structure comprises 179 residues: ATP synthase subunit delta (179 aa).

It belongs to the ATPase delta chain family. In terms of assembly, F-type ATPases have 2 components, F(1) - the catalytic core - and F(0) - the membrane proton channel. F(1) has five subunits: alpha(3), beta(3), gamma(1), delta(1), epsilon(1). F(0) has three main subunits: a(1), b(2) and c(10-14). The alpha and beta chains form an alternating ring which encloses part of the gamma chain. F(1) is attached to F(0) by a central stalk formed by the gamma and epsilon chains, while a peripheral stalk is formed by the delta and b chains.

The protein resides in the cell inner membrane. Functionally, f(1)F(0) ATP synthase produces ATP from ADP in the presence of a proton or sodium gradient. F-type ATPases consist of two structural domains, F(1) containing the extramembraneous catalytic core and F(0) containing the membrane proton channel, linked together by a central stalk and a peripheral stalk. During catalysis, ATP synthesis in the catalytic domain of F(1) is coupled via a rotary mechanism of the central stalk subunits to proton translocation. Its function is as follows. This protein is part of the stalk that links CF(0) to CF(1). It either transmits conformational changes from CF(0) to CF(1) or is implicated in proton conduction. The protein is ATP synthase subunit delta of Anaeromyxobacter sp. (strain Fw109-5).